The primary structure comprises 289 residues: Pteridine reductase 1 (289 aa).

An NADP(+)-binding site is contributed by 14–41; it reads GAAKRLGSSIAEALHAEGYTVCLHYHRS. Serine 176 contributes to the substrate binding site. Tyrosine 195 (proton acceptor) is an active-site residue. 195–199 lines the NADP(+) pocket; it reads YTMAK.

It belongs to the short-chain dehydrogenases/reductases (SDR) family. In terms of assembly, homotetramer.

It catalyses the reaction (6R)-L-erythro-5,6,7,8-tetrahydrobiopterin + 2 NADP(+) = L-erythro-biopterin + 2 NADPH + 2 H(+). It participates in cofactor biosynthesis; tetrahydrobiopterin biosynthesis; tetrahydrobiopterin from biopterin: step 1/1. Functionally, exhibits a NADPH-dependent biopterin reductase activity. Has good activity with folate and significant activity with dihydrofolate and dihydrobiopterin, but not with quinonoid dihydrobiopterin. Confers resistance to methotrexate (MTX). The chain is Pteridine reductase 1 (PTR1) from Leishmania tarentolae (Sauroleishmania tarentolae).